Consider the following 63-residue polypeptide: Hirudin (63 aa).

An interaction with thrombin active site region spans residues 1-3 (VVY). Cystine bridges form between C6/C14, C16/C28, and C22/C39. A disordered region spans residues 39 to 63 (CVTGEGTPGPQSHNDGDFEEPEEYL). An O-linked (GalNAc...) threonine glycan is attached at T45. Residues 55 to 63 (DFEEPEEYL) are interaction with fibrinogen-binding exosite of thrombin. Y62 carries the post-translational modification Sulfotyrosine.

The protein belongs to the protease inhibitor I14 (hirudin) family.

It is found in the secreted. In terms of biological role, hirudin is a potent thrombin-specific protease inhibitor. It forms a stable non-covalent complex with alpha-thrombin, thereby abolishing its ability to cleave fibrinogen. The sequence is that of Hirudin from Poecilobdella viridis (Indian freshwater leech).